A 339-amino-acid polypeptide reads, in one-letter code: Uroporphyrinogen decarboxylase (339 aa).

Substrate is bound by residues 23–27 (RQAGR), Asp72, Tyr147, Ser202, and His315.

The protein belongs to the uroporphyrinogen decarboxylase family. Homodimer.

The protein resides in the cytoplasm. The catalysed reaction is uroporphyrinogen III + 4 H(+) = coproporphyrinogen III + 4 CO2. It functions in the pathway porphyrin-containing compound metabolism; protoporphyrin-IX biosynthesis; coproporphyrinogen-III from 5-aminolevulinate: step 4/4. In terms of biological role, catalyzes the decarboxylation of four acetate groups of uroporphyrinogen-III to yield coproporphyrinogen-III. The protein is Uroporphyrinogen decarboxylase of Desulfotalea psychrophila (strain LSv54 / DSM 12343).